Reading from the N-terminus, the 1218-residue chain is DNA polymerase subunit gamma-1 (1218 aa).

The interval 31–50 (LDPVPSDGRPPSQMPSSENG) is disordered. An Exo I motif is present at residues 179–183 (VFDVE). Residue D181 is the Exonuclease activity of the active site. Residues 250-258 (VGHNVSFDR) carry the Exo II motif. S289 contributes to the DNA binding site. The Exo III signature appears at 378 to 386 (YCARDVWAT). Positions 484 to 524 (KKVKKPASASKLPIEGAGPFGDPMDQEDPGPPSEEEELQRS) are disordered. An accessory-interacting determinant region spans residues 492-553 (ASKLPIEGAG…RPQHLPGHPG (62 aa)). Acidic residues predominate over residues 507–520 (MDQEDPGPPSEEEE). R561 is a binding site for RNA. S575 provides a ligand contact to DNA. 3 residues coordinate RNA: H733, G742, and K747. K785 and T828 together coordinate DNA. The segment at 837–843 (TWLTASN) is trigger loop. The RNA site is built by S842 and R848. The Pol A motif lies at 866–875 (VGADVDSQEL). 7 residues coordinate a 2'-deoxyribonucleoside 5'-triphosphate: D869, V870, S872, E874, R922, K926, and Y930. The Mg(2+) site is built by D869 and V870. The short motif at 922–937 (REHAKIFNYGRIYGAG) is the Pol B element. 2 residues coordinate DNA: T1073 and S1074. A Pol C motif is present at residues 1113 to 1120 (HDEVRYLV). D1114 contacts a 2'-deoxyribonucleoside 5'-triphosphate. Mg(2+) is bound at residue D1114.

The protein belongs to the DNA polymerase type-A family. Heterotrimer composed of a catalytic subunit and a homodimer of accessory subunits (POLG:POLG2). Interacts with TTC3. Interacts with LIG3. It depends on Mg(2+) as a cofactor.

It is found in the mitochondrion. It localises to the mitochondrion matrix. Its subcellular location is the mitochondrion nucleoid. It carries out the reaction DNA(n) + a 2'-deoxyribonucleoside 5'-triphosphate = DNA(n+1) + diphosphate. The catalysed reaction is a 3'-end 2'-deoxyribonucleotidyl-deoxyribonucleotide-DNA + H2O = a 3'-end 2'-deoxyribonucleotide-DNA + a 2'-deoxyribonucleoside 5'-phosphate + H(+). The enzyme catalyses a 5'-end 2'-deoxyribose-2'-deoxyribonucleotide-DNA = (2E,4S)-4-hydroxypenten-2-al-5-phosphate + a 5'-end 5'-phospho-2'-deoxyribonucleoside-DNA + H(+). With respect to regulation, inhibited by dideoxynucleotides such as antiviral agent zalcitabine. Its function is as follows. Catalytic subunit of DNA polymerase gamma solely responsible for replication of mitochondrial DNA (mtDNA). Replicates both heavy and light strands of the circular mtDNA genome using a single-stranded DNA template, RNA primers and the four deoxyribonucleoside triphosphates as substrates. Has 5' -&gt; 3' polymerase activity. Functionally interacts with TWNK and SSBP1 at the replication fork to form a highly processive replisome, where TWNK unwinds the double-stranded DNA template prior to replication and SSBP1 covers the parental heavy strand to enable continuous replication of the entire mitochondrial genome. A single nucleotide incorporation cycle includes binding of the incoming nucleotide at the insertion site, a phosphodiester bond formation reaction that extends the 3'-end of the primer DNA, and translocation of the primer terminus to the post-insertion site. After completing replication of a mtDNA strand, mediates 3' -&gt; 5' exonucleolytic degradation at the nick to enable proper ligation. Highly accurate due to high nucleotide selectivity and 3' -&gt; 5' exonucleolytic proofreading. Proficiently corrects base substitutions, single-base additions and deletions in non-repetitive sequences and short repeats, but displays lower proofreading activity when replicating longer homopolymeric stretches. Exerts exonuclease activity toward single-stranded DNA and double-stranded DNA containing 3'-terminal mispairs. When a misincorporation occurs, transitions from replication to a pro-nucleolytic editing mode and removes the missincorporated nucleoside in the exonuclease active site. Proceeds via an SN2 nucleolytic mechanism in which Asp-198 catalyzes phosphodiester bond hydrolysis and Glu-200 stabilizes the leaving group. As a result the primer strand becomes one nucleotide shorter and is positioned in the post-insertion site, ready to resume DNA synthesis. Exerts 5'-deoxyribose phosphate (dRP) lyase activity and mediates repair-associated mtDNA synthesis (gap filling) in base-excision repair pathway. Catalyzes the release of the 5'-terminal 2-deoxyribose-5-phosphate sugar moiety from incised apurinic/apyrimidinic (AP) sites to produce a substrate for DNA ligase. The dRP lyase reaction does not require divalent metal ions and likely proceeds via a Schiff base intermediate in a beta-elimination reaction mechanism. This Mus musculus (Mouse) protein is DNA polymerase subunit gamma-1.